We begin with the raw amino-acid sequence, 131 residues long: Translation initiation factor 5A (131 aa).

Hypusine is present on Lys36.

This sequence belongs to the eIF-5A family. The N-terminus is blocked.

The protein localises to the cytoplasm. Its function is as follows. Functions by promoting the formation of the first peptide bond. The polypeptide is Translation initiation factor 5A (eif5a) (Sulfolobus acidocaldarius (strain ATCC 33909 / DSM 639 / JCM 8929 / NBRC 15157 / NCIMB 11770)).